Reading from the N-terminus, the 365-residue chain is Ferredoxin--NADP reductase, chloroplastic (365 aa).

A disordered region spans residues 1 to 22 (MAAAVTAAVSFPSTKSTPLSTR). Residues 11–22 (FPSTKSTPLSTR) show a composition bias toward polar residues. Residues 86-208 (KNPYTGRCLL…TGPVGKEMLM (123 aa)) enclose the FAD-binding FR-type domain. FAD contacts are provided by residues 144–147 (RLYS), 165–167 (CVK), Tyr171, 182–184 (VCS), and Thr223. The NADP(+) site is built by Ser147 and Lys167. Residues Thr223, 255–256 (VP), 285–286 (SR), Lys295, 324–325 (GL), and Glu363 contribute to the NADP(+) site.

This sequence belongs to the ferredoxin--NADP reductase type 1 family. Requires FAD as cofactor.

It localises to the plastid. Its subcellular location is the chloroplast stroma. The protein localises to the chloroplast thylakoid membrane. The catalysed reaction is 2 reduced [2Fe-2S]-[ferredoxin] + NADP(+) + H(+) = 2 oxidized [2Fe-2S]-[ferredoxin] + NADPH. It functions in the pathway energy metabolism; photosynthesis. Functionally, may play a key role in regulating the relative amounts of cyclic and non-cyclic electron flow to meet the demands of the plant for ATP and reducing power. The chain is Ferredoxin--NADP reductase, chloroplastic (PETH) from Mesembryanthemum crystallinum (Common ice plant).